Reading from the N-terminus, the 382-residue chain is Leucoanthocyanidin reductase (382 aa).

NADP(+)-binding positions include 19–25, Arg44, and Lys52; that span reads GGTGFIG. Catalysis depends on Lys142, which acts as the Proton acceptor. Residue Arg146 participates in NADP(+) binding.

It belongs to the NmrA-type oxidoreductase family. Isoflavone reductase subfamily. As to quaternary structure, monomer.

The enzyme catalyses (2R,3S)-catechin + NADP(+) + H2O = (2R,3S,4S)-leucocyanidin + NADPH + H(+). It participates in flavonoid metabolism; proanthocyanidin biosynthesis. In terms of biological role, catalyzes the synthesis of catechin from 3,4-cis-leucocyanidin. Also synthesizes afzelechin and gallocatechin. The protein is Leucoanthocyanidin reductase (LAR) of Desmodium uncinatum (Silverleaf Spanish clover).